The chain runs to 149 residues: MSIPFSNTHYRIPQGFGNLLEGLTREILREQPDNIPAFAAAYFENLLEKREKTSFDPAEWGAKVEDRFYNNHAFKEQEQVEKCEQELAKSSGREETPVTPFEESTEEEREQEEAAALKIQSLFRGHVAREEVKKMKSDKNENLKEEADN.

Residues 83–96 (CEQELAKSSGREET) are compositionally biased toward basic and acidic residues. The disordered stretch occupies residues 83–114 (CEQELAKSSGREETPVTPFEESTEEEREQEEA). Residues 103–113 (ESTEEEREQEE) show a composition bias toward acidic residues. The region spanning 112–141 (EEAAALKIQSLFRGHVAREEVKKMKSDKNE) is the IQ domain.

Homodimer. May interact with ROPN1. In terms of tissue distribution, testis- and sperm-specific.

Its subcellular location is the membrane. Functionally, sperm surface zona pellucida binding protein. Helps to bind spermatozoa to the zona pellucida with high affinity. Might function in binding zona pellucida and carbohydrates. The polypeptide is Sperm surface protein Sp17 (Spa17) (Mus musculus (Mouse)).